The following is a 9518-amino-acid chain: Nonribosomal peptide synthetase ungA' (9518 aa).

Residues 214 to 611 form an adenylation 1 region; that stretch reads ERARETPNAP…ARKDDQVKVR (398 aa). Positions 738–814 constitute a Carrier 1 domain; sequence APRTEMEWRL…DLAEVARLEQ (77 aa). Residue Ser775 is modified to O-(pantetheine 4'-phosphoryl)serine. A condensation 1 region spans residues 853-1250; sequence DLLPCSPLQE…EEVLRQISRE (398 aa). Residues 1292-1695 are adenylation 2; it reads QRVQEQPDRP…GRKDTQVKIR (404 aa). Residues 1822 to 1898 form the Carrier 2 domain; sequence LPQTELERRL…RLAHCSQTEQ (77 aa). Ser1859 carries the post-translational modification O-(pantetheine 4'-phosphoryl)serine. Residues 1911 to 2336 form an epimerization 1 region; it reads TFALSPIQQL…QRSLEVVAKE (426 aa). The interval 2376–2803 is condensation 2; it reads EDIYPCSPVQ…DNLQIASSQD (428 aa). The adenylation 3 stretch occupies residues 2829 to 3224; that stretch reads RIQQQPEAPA…NRKDNQVKIR (396 aa). A Carrier 3 domain is found at 3352 to 3428; sequence APATASEQRL…DMAQTLKVES (77 aa). Residue Ser3389 is modified to O-(pantetheine 4'-phosphoryl)serine. Residues 3465–3869 form a condensation 3 region; that stretch reads EDVLPCTPLQ…QVCKEASQYL (405 aa). Residues 3906 to 4307 form an adenylation 4 region; the sequence is QQAHQRPNAS…GRRDAQVKIR (402 aa). The region spanning 4436–4512 is the Carrier 4 domain; it reads TPTTITECRI…RLAACTTPVD (77 aa). Ser4473 is modified (O-(pantetheine 4'-phosphoryl)serine). Residues 4527 to 4954 form an epimerization 2 region; the sequence is ALSPIQQLFV…EDAAQELPSL (428 aa). Positions 4990–5411 are condensation 4; the sequence is VEDIYPCSPI…ANLISKEDLR (422 aa). The segment at 5433-5829 is adenylation 5; it reads SEQAQNQPDA…GRKDGQVKIR (397 aa). One can recognise a Carrier 5 domain in the interval 5957–6033; the sequence is VASSPVELAL…QLAKNSGLQA (77 aa). An O-(pantetheine 4'-phosphoryl)serine modification is found at Ser5994. The interval 6050–6470 is epimerization 3; it reads ELSPIQRMFF…CEHSLVMAAH (421 aa). Residues 6512–6856 are condensation 5; that stretch reads VEDIYPCTPI…TGISVQNNAS (345 aa). The segment at 6947 to 7338 is adenylation 6; sequence LRPNSSAIHA…GRKDSQVKVR (392 aa). A Carrier 6 domain is found at 7464-7540; it reads LPRTEVEMQL…GLAPSAASQA (77 aa). Residue Ser7501 is modified to O-(pantetheine 4'-phosphoryl)serine. The segment at 7555 to 7978 is epimerization 4; the sequence is ELSPIQQMFI…LQTAARELPH (424 aa). The segment at 8016-8444 is condensation 6; the sequence is VEDIYPLTPI…QVDLAGRHDQ (429 aa). The tract at residues 8468 to 8867 is adenylation 7; that stretch reads MQCQQRPDAT…SRKDAQVKIR (400 aa). Residues 8995-9071 enclose the Carrier 7 domain; that stretch reads PLTTEMEWRL…DMAHYLREGQ (77 aa). Position 9032 is an O-(pantetheine 4'-phosphoryl)serine (Ser9032). The segment at 9111–9454 is condensation 7; the sequence is DVYPTTELQD…DNLEHDAGTS (344 aa).

Belongs to the NRP synthetase family.

It participates in secondary metabolite biosynthesis. Its function is as follows. Nonribosomal peptide synthetase; part of the gene cluster that mediates the biosynthesis of the unguisins, gamma-aminobutyric acid (GABA)-containing fungal cyclic heptapeptides with the amino acid sequence cyclo-(D-Ala1-D-Val2-L-Leu3-beta-MePhe4-D-Ala5-D-Trp6-GABA7) for unguisin H and cyclo-(D-Ala1-D-Ala2-L-Leu3-beta-MePhe4-D-Ala5-D-Trp6-GABA7) for unguisin I. UngA' is the main enzyme within the cluster which condenses the 7 residues using its respective 7 modules. The terminal condensation domain (Ct) is involved in cyclization with D-alanine and thereby releasing of unguisins H and I. The alanine racemase ungC' provides D-alanine, which is then accepted by the first adenylation domain of ungA', whereas the methyltransferase ungE' provides the (2R,3R)-beta-methylphenylalanine residue incorporated by the module 4. Finally, the hydrolase ungD' catalyzes the hydrolysis between the D-tryptophan and GABA residues of unguisins H and I to produce the corresponding linear peptides. This is Nonribosomal peptide synthetase ungA' from Aspergillus campestris (strain IBT 28561).